A 311-amino-acid chain; its full sequence is MGHNHNEGANKKVLLISFIMITGYMIIEAIGGFLTNSLALLSDAGHMLSDSISLMVALIAFTLAEKKANHNKTFGYKRFEILAAVINGAALILISLYIIYEAIERFSNPPKVATTGMLTISIIGLVVNLLVAWIMMSGGDTKNNLNIRGAYLHVISDMLGSVGAILAAILIIFFGWGWADPLASIIVAILVLRSGYNVTKDSIHILMEGTPENIDVSDIIRTIEGTEGIQNIHDLHIWSITSGLNALSCHAVVDDQLTISESENILRKIEHELEHKGITHVTIQMETEAHNHDNAILCQPKMEKQRDHHHH.

The Extracellular segment spans residues 1 to 12 (MGHNHNEGANKK). Residues 13-33 (VLLISFIMITGYMIIEAIGGF) form a helical membrane-spanning segment. The Cytoplasmic segment spans residues 34–43 (LTNSLALLSD). The helical transmembrane segment at 44–64 (AGHMLSDSISLMVALIAFTLA) threads the bilayer. The Extracellular segment spans residues 65 to 78 (EKKANHNKTFGYKR). The helical transmembrane segment at 79–99 (FEILAAVINGAALILISLYII) threads the bilayer. Residues 100-115 (YEAIERFSNPPKVATT) lie on the Cytoplasmic side of the membrane. The chain crosses the membrane as a helical span at residues 116 to 136 (GMLTISIIGLVVNLLVAWIMM). At 137–157 (SGGDTKNNLNIRGAYLHVISD) the chain is on the extracellular side. Residues 158–178 (MLGSVGAILAAILIIFFGWGW) form a helical membrane-spanning segment. The Cytoplasmic portion of the chain corresponds to 179–311 (ADPLASIIVA…MEKQRDHHHH (133 aa)).

This sequence belongs to the cation diffusion facilitator (CDF) transporter (TC 2.A.4) family. SLC30A subfamily.

It localises to the cell membrane. In terms of biological role, involved in divalent cation and potassium homeostasis in the cell. Catalyzes the active efflux of zinc, cadmium and cobalt, in exchange for potassium and H(+) ions. The polypeptide is Cadmium, cobalt and zinc/H(+)-K(+) antiporter (czcD) (Bacillus subtilis (strain 168)).